A 752-amino-acid chain; its full sequence is Photosystem I P700 chlorophyll a apoprotein A1 (752 aa).

A run of 8 helical transmembrane segments spans residues 73-96 (IFSAHFGHLAVVFIWLSGAYFHGA), 159-182 (LYVTAIGALVMAALMLFAGWFHYH), 198-222 (MNHHLAGLFGLGSLSWAGHQIHVSL), 294-312 (RAHHHLAIAVLFIVAGHMY), 349-372 (WHAQLSLNLALFGSLSIIVAHHMY), 388-414 (LCLFTHHVWIGGFLIVGAGAHAAIFMV), 436-458 (AIISHLNWVCIFLGFHSFGLYIH), and 533-551 (FLVHHIHAFTIHVTVLILL). 2 residues coordinate [4Fe-4S] cluster: Cys575 and Cys584. Helical transmembrane passes span 591–612 (HVFLGLFWMYNSLSVVLFHFSW) and 666–688 (LSAYGLMFLGAHFIWAFSLMFLF). Residue His677 coordinates chlorophyll a'. Residues Met685 and Tyr693 each coordinate chlorophyll a. Residue Trp694 participates in phylloquinone binding. A helical transmembrane segment spans residues 726-746 (AVGVAHYLLGGIATTWSFFHA).

It belongs to the PsaA/PsaB family. In terms of assembly, the PsaA/B heterodimer binds the P700 chlorophyll special pair and subsequent electron acceptors. PSI consists of a core antenna complex that captures photons, and an electron transfer chain that converts photonic excitation into a charge separation. The eukaryotic PSI reaction center is composed of at least 11 subunits. P700 is a chlorophyll a/chlorophyll a' dimer, A0 is one or more chlorophyll a, A1 is one or both phylloquinones and FX is a shared 4Fe-4S iron-sulfur center. serves as cofactor.

It localises to the plastid. The protein resides in the cyanelle thylakoid membrane. It catalyses the reaction reduced [plastocyanin] + hnu + oxidized [2Fe-2S]-[ferredoxin] = oxidized [plastocyanin] + reduced [2Fe-2S]-[ferredoxin]. In terms of biological role, psaA and PsaB bind P700, the primary electron donor of photosystem I (PSI), as well as the electron acceptors A0, A1 and FX. PSI is a cytochrome c6-ferredoxin oxidoreductase, converting photonic excitation into a charge separation, which transfers an electron from the donor P700 chlorophyll pair to the spectroscopically characterized acceptors A0, A1, FX, FA and FB in turn. Oxidized P700 is reduced on the lumenal side of the thylakoid membrane by cytochrome c6. In Cyanophora paradoxa, this protein is Photosystem I P700 chlorophyll a apoprotein A1.